A 297-amino-acid polypeptide reads, in one-letter code: Probable endonuclease 4 (297 aa).

The disordered stretch occupies residues 1–21 (MPEIGAHVSAAGGPQRAPERG). The Zn(2+) site is built by histidine 67, histidine 107, glutamate 145, aspartate 179, histidine 182, histidine 216, aspartate 229, histidine 231, and glutamate 261.

Belongs to the AP endonuclease 2 family. Requires Zn(2+) as cofactor.

It catalyses the reaction Endonucleolytic cleavage to 5'-phosphooligonucleotide end-products.. Functionally, endonuclease IV plays a role in DNA repair. It cleaves phosphodiester bonds at apurinic or apyrimidinic (AP) sites, generating a 3'-hydroxyl group and a 5'-terminal sugar phosphate. The chain is Probable endonuclease 4 from Halorhodospira halophila (strain DSM 244 / SL1) (Ectothiorhodospira halophila (strain DSM 244 / SL1)).